We begin with the raw amino-acid sequence, 235 residues long: Fibrillarin-like rRNA/tRNA 2'-O-methyltransferase (235 aa).

S-adenosyl-L-methionine contacts are provided by residues 91 to 92 (TT), 110 to 111 (EF), 137 to 138 (DA), and 157 to 160 (DVAQ).

This sequence belongs to the methyltransferase superfamily. Fibrillarin family. In terms of assembly, interacts with nop5. Component of box C/D small ribonucleoprotein (sRNP) particles that contain rpl7ae, FlpA and nop5, plus a guide RNA.

Functionally, involved in pre-rRNA and tRNA processing. Utilizes the methyl donor S-adenosyl-L-methionine to catalyze the site-specific 2'-hydroxyl methylation of ribose moieties in rRNA and tRNA. Site specificity is provided by a guide RNA that base pairs with the substrate. Methylation occurs at a characteristic distance from the sequence involved in base pairing with the guide RNA. The protein is Fibrillarin-like rRNA/tRNA 2'-O-methyltransferase of Pyrobaculum islandicum (strain DSM 4184 / JCM 9189 / GEO3).